Here is a 497-residue protein sequence, read N- to C-terminus: Protein DETOXIFICATION 25 (497 aa).

Helical transmembrane passes span 43 to 63 (LPSTLFRVMSFGCVVVAQAFI), 70 to 90 (GLAAYALLQSTFIRFIYGIMA), 121 to 141 (IVDTFIATLFVPFIVLAGPIL), 157 to 177 (IYPWVIPYLYSIVFTMTMQMY), 186 to 206 (IIGILSTLALVLDIAATWWCV), 216 to 236 (ALLGLNISSWSVAIAEFVYVF), 261 to 281 (LSISSGFMLCLEYWYMSIIVL), 291 to 311 (IAISAFSICQYIYSWEMNICF), 339 to 359 (VVLVVSAVIGVICSALCLAFG), 381 to 401 (IVLSISILFNIIQPILSGVAI), 416 to 436 (SYYAIGVPLGVLLVYVFNFGI), and 438 to 458 (GLWSGMLAGVGIQTLILCYVI).

The protein belongs to the multi antimicrobial extrusion (MATE) (TC 2.A.66.1) family.

It localises to the membrane. The protein is Protein DETOXIFICATION 25 of Arabidopsis thaliana (Mouse-ear cress).